A 517-amino-acid chain; its full sequence is Crotonobetaine/carnitine--CoA ligase (517 aa).

Belongs to the ATP-dependent AMP-binding enzyme family.

It catalyses the reaction 4-(trimethylamino)butanoate + ATP + CoA = 4-(trimethylamino)butanoyl-CoA + AMP + diphosphate. The enzyme catalyses crotonobetaine + ATP + CoA = crotonobetainyl-CoA + AMP + diphosphate. The catalysed reaction is (R)-carnitine + ATP + CoA = (R)-carnitinyl-CoA + AMP + diphosphate. Its pathway is amine and polyamine metabolism; carnitine metabolism. Functionally, catalyzes the transfer of CoA to carnitine, generating the initial carnitinyl-CoA needed for the CaiB reaction cycle. Also has activity toward crotonobetaine and gamma-butyrobetaine. The chain is Crotonobetaine/carnitine--CoA ligase from Escherichia coli O45:K1 (strain S88 / ExPEC).